The sequence spans 600 residues: Aspartate--tRNA(Asp/Asn) ligase (600 aa).

Glutamate 174 serves as a coordination point for L-aspartate. The segment at 198–201 is aspartate; that stretch reads QLFK. Arginine 220 contributes to the L-aspartate binding site. ATP contacts are provided by residues 220-222 and glutamine 229; that span reads RDE. Histidine 457 contacts L-aspartate. Glutamate 491 lines the ATP pocket. Arginine 498 contributes to the L-aspartate binding site. ATP is bound at residue 543-546; the sequence is GLDR.

It belongs to the class-II aminoacyl-tRNA synthetase family. Type 1 subfamily. Homodimer.

It is found in the cytoplasm. It catalyses the reaction tRNA(Asx) + L-aspartate + ATP = L-aspartyl-tRNA(Asx) + AMP + diphosphate. Its function is as follows. Aspartyl-tRNA synthetase with relaxed tRNA specificity since it is able to aspartylate not only its cognate tRNA(Asp) but also tRNA(Asn). Reaction proceeds in two steps: L-aspartate is first activated by ATP to form Asp-AMP and then transferred to the acceptor end of tRNA(Asp/Asn). The sequence is that of Aspartate--tRNA(Asp/Asn) ligase from Burkholderia cenocepacia (strain ATCC BAA-245 / DSM 16553 / LMG 16656 / NCTC 13227 / J2315 / CF5610) (Burkholderia cepacia (strain J2315)).